The sequence spans 555 residues: Membrane protein insertase YidC (555 aa).

The chain crosses the membrane as a helical span at residues 7–24; that stretch reads ILWVIFSMSLVLLYDNWQ. The segment at 62 to 81 is disordered; that stretch reads APGAAGTAAPAAPQAAAQPT. Transmembrane regions (helical) follow at residues 334 to 354, 360 to 380, 430 to 450, 468 to 488, and 503 to 523; these read LELV…FWLL, FLGN…LVFF, LGGC…YWVL, LSVP…MFVQ, and VMMI…AGLV.

Belongs to the OXA1/ALB3/YidC family. Type 1 subfamily. As to quaternary structure, interacts with the Sec translocase complex via SecD. Specifically interacts with transmembrane segments of nascent integral membrane proteins during membrane integration.

It localises to the cell inner membrane. In terms of biological role, required for the insertion and/or proper folding and/or complex formation of integral membrane proteins into the membrane. Involved in integration of membrane proteins that insert both dependently and independently of the Sec translocase complex, as well as at least some lipoproteins. Aids folding of multispanning membrane proteins. The sequence is that of Membrane protein insertase YidC from Cupriavidus necator (strain ATCC 17699 / DSM 428 / KCTC 22496 / NCIMB 10442 / H16 / Stanier 337) (Ralstonia eutropha).